A 511-amino-acid polypeptide reads, in one-letter code: Protein HESO1 (511 aa).

The disordered stretch occupies residues 378-511 (ARPQNQQMQQ…GQIWRPRHEQ (134 aa)). Residues 381-392 (QNQQMQQNWSQS) are compositionally biased toward low complexity. Positions 404–465 (LTQSRPQQNW…TSAGSSQNQG (62 aa)) are enriched in polar residues.

This sequence belongs to the DNA polymerase type-B-like family.

The protein localises to the cytoplasm. It is found in the P-body. The protein resides in the nucleus. The catalysed reaction is RNA(n) + UTP = RNA(n)-3'-uridine ribonucleotide + diphosphate. Completely inhibited by 2'-O-methylation on the substrate RNA. Uridylates small RNAs to trigger their degradation. Catalyzes the uridylation of 5' fragments produced by AGO1-mediated cleavage of miRNA target RNAs. Acts synergistically with URT1 in unmethylated miRNA uridylation, leading to their degradation. URT1 and HESO1 prefer substrates with different 3' end nucleotides and act cooperatively to tail different forms of the same miRNAs. URT1 and HESO1 act sequentially, with URT1 mono-uridylating the miRNAs followed by their further uridylation by HESO1. URT1 and HESO1 are involved in the uridylation and clearance of RISC-generated 5' mRNA fragments. Able to act on AGO1-bound miRNAs and the uridylated species stay associated with AGO1. In Arabidopsis thaliana (Mouse-ear cress), this protein is Protein HESO1.